A 310-amino-acid chain; its full sequence is Putative integrase/recombinase y4rE (310 aa).

The Core-binding (CB) domain maps to 6–83 (RFLGEKVERY…VLRRFYEYLA (78 aa)). The Tyr recombinase domain maps to 104 to 301 (PPPRILSEAE…SVDLLAMAAE (198 aa)). Active-site residues include R148, K173, H245, R248, and H279. Y288 functions as the O-(3'-phospho-DNA)-tyrosine intermediate in the catalytic mechanism.

It belongs to the 'phage' integrase family.

This is Putative integrase/recombinase y4rE from Sinorhizobium fredii (strain NBRC 101917 / NGR234).